The chain runs to 390 residues: Anhydro-N-acetylmuramic acid kinase (390 aa).

An ATP-binding site is contributed by 9-16; it reads GTSLDGID.

This sequence belongs to the anhydro-N-acetylmuramic acid kinase family.

The catalysed reaction is 1,6-anhydro-N-acetyl-beta-muramate + ATP + H2O = N-acetyl-D-muramate 6-phosphate + ADP + H(+). It functions in the pathway amino-sugar metabolism; 1,6-anhydro-N-acetylmuramate degradation. The protein operates within cell wall biogenesis; peptidoglycan recycling. Functionally, catalyzes the specific phosphorylation of 1,6-anhydro-N-acetylmuramic acid (anhMurNAc) with the simultaneous cleavage of the 1,6-anhydro ring, generating MurNAc-6-P. Is required for the utilization of anhMurNAc either imported from the medium or derived from its own cell wall murein, and thus plays a role in cell wall recycling. The polypeptide is Anhydro-N-acetylmuramic acid kinase (Bacillus cereus (strain B4264)).